The chain runs to 332 residues: Phenylalanine--tRNA ligase alpha subunit (332 aa).

Residue Glu252 participates in Mg(2+) binding.

Belongs to the class-II aminoacyl-tRNA synthetase family. Phe-tRNA synthetase alpha subunit type 1 subfamily. In terms of assembly, tetramer of two alpha and two beta subunits. Mg(2+) serves as cofactor.

The protein resides in the cytoplasm. The catalysed reaction is tRNA(Phe) + L-phenylalanine + ATP = L-phenylalanyl-tRNA(Phe) + AMP + diphosphate + H(+). This Marinobacter nauticus (strain ATCC 700491 / DSM 11845 / VT8) (Marinobacter aquaeolei) protein is Phenylalanine--tRNA ligase alpha subunit.